Here is a 135-residue protein sequence, read N- to C-terminus: Succinate dehydrogenase assembly factor 3, mitochondrial (135 aa).

The transit peptide at 1 to 12 (MRIFTRLLYAAP) directs the protein to the mitochondrion.

Belongs to the complex I LYR family. SDHAF3 subfamily. Interacts with the iron-sulfur protein subunit within the SDH catalytic dimer.

The protein resides in the mitochondrion matrix. Plays an essential role in the assembly of succinate dehydrogenase (SDH), an enzyme complex (also referred to as respiratory complex II) that is a component of both the tricarboxylic acid (TCA) cycle and the mitochondrial electron transport chain, and which couples the oxidation of succinate to fumarate with the reduction of ubiquinone (coenzyme Q) to ubiquinol. Promotes maturation of the iron-sulfur protein subunit of the SDH catalytic dimer, protecting it from the deleterious effects of oxidants. May act together with SDHAF1. This chain is Succinate dehydrogenase assembly factor 3, mitochondrial, found in Emericella nidulans (strain FGSC A4 / ATCC 38163 / CBS 112.46 / NRRL 194 / M139) (Aspergillus nidulans).